Consider the following 155-residue polypeptide: Small ribosomal subunit protein uS7cz/uS7cy (155 aa).

It belongs to the universal ribosomal protein uS7 family. In terms of assembly, part of the 30S ribosomal subunit.

The protein resides in the plastid. It is found in the chloroplast. One of the primary rRNA binding proteins, it binds directly to 16S rRNA where it nucleates assembly of the head domain of the 30S subunit. In Coffea arabica (Arabian coffee), this protein is Small ribosomal subunit protein uS7cz/uS7cy (rps7-A).